The following is a 434-amino-acid chain: Glutamate-1-semialdehyde 2,1-aminomutase 1 (434 aa).

Lysine 270 carries the post-translational modification N6-(pyridoxal phosphate)lysine.

It belongs to the class-III pyridoxal-phosphate-dependent aminotransferase family. HemL subfamily. Homodimer. Pyridoxal 5'-phosphate serves as cofactor.

It localises to the cytoplasm. The enzyme catalyses (S)-4-amino-5-oxopentanoate = 5-aminolevulinate. The protein operates within porphyrin-containing compound metabolism; protoporphyrin-IX biosynthesis; 5-aminolevulinate from L-glutamyl-tRNA(Glu): step 2/2. This chain is Glutamate-1-semialdehyde 2,1-aminomutase 1, found in Bacillus anthracis (strain A0248).